A 513-amino-acid polypeptide reads, in one-letter code: MQLNSTEISDLIKQRIESFNVVSEARNEGTIVSVSDGIIRIHGLADVMQGEMIELPGGRYALALNLERDSVGAVVMGPYADLKEGMKVTGTGRILEVPVGPELLGRVVNTLGEPIDGKGPIEAKLTSPVEVIAPGVIDRQSVDQPVQTGYKSVDSMIPIGRGQRELIIGDRQTGKTAMAIDAIINQKNSGIFSIYVAIGQKASTIANVVRKLEEHGALKNTIVVVASASESAALQYLAPYAGCAMGEYFRDRGEDALIVYDDLSKQAVAYRQISLLLKRPPGREAFPGDVFYLHSRLLERAARVNAEYVERFTNGEVKGKTGSLTALPIIETQAGDVSAFVPTNVISITDGQIFLQTELFNAGVRPAVDPGISVSRVGGSAQTKIIKKLSGGIRTALAAYRELAAFAQFSSDLDEATKRQLNHGQKVTELMKQKQYAPMSVFDQALTIFAAERGYLSDIELSKVLDFEAALLSYARGQYAELAAEIDKTGAYNDEIEAQLKKLTDDFKATQTW.

169-176 is an ATP binding site; the sequence is GDRQTGKT.

Belongs to the ATPase alpha/beta chains family. In terms of assembly, F-type ATPases have 2 components, CF(1) - the catalytic core - and CF(0) - the membrane proton channel. CF(1) has five subunits: alpha(3), beta(3), gamma(1), delta(1), epsilon(1). CF(0) has three main subunits: a(1), b(2) and c(9-12). The alpha and beta chains form an alternating ring which encloses part of the gamma chain. CF(1) is attached to CF(0) by a central stalk formed by the gamma and epsilon chains, while a peripheral stalk is formed by the delta and b chains.

Its subcellular location is the cell inner membrane. The enzyme catalyses ATP + H2O + 4 H(+)(in) = ADP + phosphate + 5 H(+)(out). Functionally, produces ATP from ADP in the presence of a proton gradient across the membrane. The alpha chain is a regulatory subunit. The protein is ATP synthase subunit alpha of Vibrio vulnificus (strain CMCP6).